The following is a 337-amino-acid chain: Glycerol-3-phosphate dehydrogenase [NAD(P)+] (337 aa).

Positions 12, 13, and 110 each coordinate NADPH. Lys-110, Gly-141, and Ser-143 together coordinate sn-glycerol 3-phosphate. Ala-145 contacts NADPH. Sn-glycerol 3-phosphate contacts are provided by Lys-196, Asp-249, Ser-259, Arg-260, and Asn-261. Lys-196 functions as the Proton acceptor in the catalytic mechanism. NADPH is bound at residue Arg-260. Val-284 and Glu-286 together coordinate NADPH.

Belongs to the NAD-dependent glycerol-3-phosphate dehydrogenase family.

It is found in the cytoplasm. It carries out the reaction sn-glycerol 3-phosphate + NAD(+) = dihydroxyacetone phosphate + NADH + H(+). It catalyses the reaction sn-glycerol 3-phosphate + NADP(+) = dihydroxyacetone phosphate + NADPH + H(+). Its pathway is membrane lipid metabolism; glycerophospholipid metabolism. Functionally, catalyzes the reduction of the glycolytic intermediate dihydroxyacetone phosphate (DHAP) to sn-glycerol 3-phosphate (G3P), the key precursor for phospholipid synthesis. The polypeptide is Glycerol-3-phosphate dehydrogenase [NAD(P)+] (Levilactobacillus brevis (strain ATCC 367 / BCRC 12310 / CIP 105137 / JCM 1170 / LMG 11437 / NCIMB 947 / NCTC 947) (Lactobacillus brevis)).